Here is a 298-residue protein sequence, read N- to C-terminus: Acetylglutamate kinase (298 aa).

Substrate is bound by residues 69–70 (GG), R91, and N196.

This sequence belongs to the acetylglutamate kinase family. ArgB subfamily.

Its subcellular location is the cytoplasm. The enzyme catalyses N-acetyl-L-glutamate + ATP = N-acetyl-L-glutamyl 5-phosphate + ADP. The protein operates within amino-acid biosynthesis; L-arginine biosynthesis; N(2)-acetyl-L-ornithine from L-glutamate: step 2/4. Its function is as follows. Catalyzes the ATP-dependent phosphorylation of N-acetyl-L-glutamate. In Nitrobacter winogradskyi (strain ATCC 25391 / DSM 10237 / CIP 104748 / NCIMB 11846 / Nb-255), this protein is Acetylglutamate kinase.